The chain runs to 231 residues: Probable tetraspanin tspE (231 aa).

At 1–21 the chain is on the cytoplasmic side; it reads MTFVDNFEFNQNTPRLVRGPF. The chain crosses the membrane as a helical span at residues 22-42; sequence IILNSIIFSLSFILLCSTGII. Over 43-58 the chain is Extracellular; sequence IYYLNEYYLVKDLTIP. The chain crosses the membrane as a helical span at residues 59–79; the sequence is LGSFILSAYMVITTIVGGIAI. Residues 80–83 lie on the Cytoplasmic side of the membrane; sequence WKKK. Residues 84–104 traverse the membrane as a helical segment; sequence LGLHLTFMVFLVVLIVCLVGV. The Extracellular segment spans residues 105 to 195; the sequence is SAKMIVDSGN…VESILKYLGY (91 aa). Residues 196 to 216 form a helical membrane-spanning segment; sequence YGIVLSVIELILLILSGFFLL. Over 217–231 the chain is Cytoplasmic; that stretch reads KTNKNVKSKSFILQD.

Belongs to the tetraspanin (TM4SF) family.

The protein localises to the membrane. The sequence is that of Probable tetraspanin tspE (tspE) from Dictyostelium discoideum (Social amoeba).